Here is a 377-residue protein sequence, read N- to C-terminus: Anhydro-N-acetylmuramic acid kinase (377 aa).

Residue 12–19 coordinates ATP; the sequence is GTSLDGID.

Belongs to the anhydro-N-acetylmuramic acid kinase family.

The catalysed reaction is 1,6-anhydro-N-acetyl-beta-muramate + ATP + H2O = N-acetyl-D-muramate 6-phosphate + ADP + H(+). It participates in amino-sugar metabolism; 1,6-anhydro-N-acetylmuramate degradation. The protein operates within cell wall biogenesis; peptidoglycan recycling. In terms of biological role, catalyzes the specific phosphorylation of 1,6-anhydro-N-acetylmuramic acid (anhMurNAc) with the simultaneous cleavage of the 1,6-anhydro ring, generating MurNAc-6-P. Is required for the utilization of anhMurNAc either imported from the medium or derived from its own cell wall murein, and thus plays a role in cell wall recycling. This chain is Anhydro-N-acetylmuramic acid kinase, found in Methylorubrum extorquens (strain CM4 / NCIMB 13688) (Methylobacterium extorquens).